A 47-amino-acid chain; its full sequence is Turripeptide Ici9.1 (47 aa).

3 disulfides stabilise this stretch: cysteine 1–cysteine 31, cysteine 5–cysteine 24, and cysteine 13–cysteine 45. Residues 1–47 (CLSVCSMEYWPVCGSDGKTYPNECHLTSEACMSNTDITVAHVGKCDQ) form the Kazal-like domain.

The protein belongs to the conopeptide P-like superfamily. As to expression, expressed by the venom duct.

The protein localises to the secreted. Its function is as follows. Acts as a neurotoxin by inhibiting an ion channel. May also act as a serine protease inhibitor, since it possess the kazal serine protease inhibitor signature. In Iotyrris cingulifera (Sea snail), this protein is Turripeptide Ici9.1.